The following is a 476-amino-acid chain: Bifunctional protein HldE (476 aa).

Positions 1–319 are ribokinase; it reads MKVSLPAFEK…EALALHHGES (319 aa). Residue 195-198 participates in ATP binding; that stretch reads NMSE. Asp264 is a catalytic residue. Residues 345–476 are cytidylyltransferase; the sequence is MTNGCFDILH…AIIQNIMANQ (132 aa).

This sequence in the N-terminal section; belongs to the carbohydrate kinase PfkB family. The protein in the C-terminal section; belongs to the cytidylyltransferase family. Homodimer.

The enzyme catalyses D-glycero-beta-D-manno-heptose 7-phosphate + ATP = D-glycero-beta-D-manno-heptose 1,7-bisphosphate + ADP + H(+). The catalysed reaction is D-glycero-beta-D-manno-heptose 1-phosphate + ATP + H(+) = ADP-D-glycero-beta-D-manno-heptose + diphosphate. The protein operates within nucleotide-sugar biosynthesis; ADP-L-glycero-beta-D-manno-heptose biosynthesis; ADP-L-glycero-beta-D-manno-heptose from D-glycero-beta-D-manno-heptose 7-phosphate: step 1/4. It functions in the pathway nucleotide-sugar biosynthesis; ADP-L-glycero-beta-D-manno-heptose biosynthesis; ADP-L-glycero-beta-D-manno-heptose from D-glycero-beta-D-manno-heptose 7-phosphate: step 3/4. In terms of biological role, catalyzes the phosphorylation of D-glycero-D-manno-heptose 7-phosphate at the C-1 position to selectively form D-glycero-beta-D-manno-heptose-1,7-bisphosphate. Its function is as follows. Catalyzes the ADP transfer from ATP to D-glycero-beta-D-manno-heptose 1-phosphate, yielding ADP-D-glycero-beta-D-manno-heptose. In Shewanella baltica (strain OS155 / ATCC BAA-1091), this protein is Bifunctional protein HldE.